An 894-amino-acid chain; its full sequence is Protein SEY1 (894 aa).

The interval 1 to 64 (MGLDVDSVPI…PRALEPAQVT (64 aa)) is disordered. Residues 1 to 768 (MGLDVDSVPI…KRGTVSSMSQ (768 aa)) are Cytoplasmic-facing. Residues 9-24 (PIAEAAAPSSMAATEP) show a composition bias toward low complexity. Polar residues predominate over residues 40 to 53 (APMNTDSSRETMPT). The 223-residue stretch at 137–359 (GFGYDICAVL…DESYVFKTEY (223 aa)) folds into the GB1/RHD3-type G domain. Residue 147–154 (GSQSTGKS) coordinates GTP. Positions 536–559 (KVDDERAQLLDELHTLARTLRANE) form a coiled coil. The helical transmembrane segment at 769 to 789 (VPIWMYGVLVVLGWNEAMAVL) threads the bilayer. The Lumenal segment spans residues 790–792 (RNP). The chain crosses the membrane as a helical span at residues 793–813 (VYFTLLCMVLATAYVIWRLNL). Residues 814 to 894 (GTPVLALASG…DSHPRLPASF (81 aa)) lie on the Cytoplasmic side of the membrane. Residues 841–894 (DGTPPSANRAREYRVPSGSTAHVSEKTPHRPLTTSGAAEADTVEDSHPRLPASF) are disordered.

The protein belongs to the TRAFAC class dynamin-like GTPase superfamily. GB1/RHD3 GTPase family. RHD3 subfamily.

It localises to the endoplasmic reticulum membrane. In terms of biological role, cooperates with the reticulon proteins and tubule-shaping DP1 family proteins to generate and maintain the structure of the tubular endoplasmic reticulum network. Has GTPase activity, which is required for its function in ER organization. This chain is Protein SEY1, found in Malassezia globosa (strain ATCC MYA-4612 / CBS 7966) (Dandruff-associated fungus).